We begin with the raw amino-acid sequence, 80 residues long: Ubiquinol-cytochrome c reductase complex assembly factor 5 (80 aa).

Over 1–19 (MFSRAQVRRALQRVPGKQR) the chain is Mitochondrial matrix. Residues 20 to 41 (FGIYRFLPFFFVLGGAMEWIMI) form a helical membrane-spanning segment. Residues 42-80 (KVRVGQETFYDVYRRKASERQYQRRLEDTSETNLHKLIK) are Mitochondrial intermembrane-facing.

This sequence belongs to the UQCC5 family. Associates with the mitochondrial ribosome. Interacts with UQCC6. Interacts with MT-CYB; interacts with newly synthesizes MT-CYB. Forms a complex, named COMB/coordinator of mitochondrial CYTB biogenesis, composed of UQCC1, UQCC2, UQCC4, UQCC5 and UQCC6; stabilizes nascent cytochrome b/MT-CYB and promotes its membrane insertion.

It localises to the mitochondrion inner membrane. In terms of biological role, required for the assembly and stability of the mitochondrial ubiquinol-cytochrome c reductase complex (complex III (CIII) or cytochrome b-c1 complex), a multisubunit transmembrane complex that is part of the mitochondrial electron transport chain (ETC) which drives oxidative phosphorylation. Mediates early complex III biogenesis. Participates in regulating the levels of electron transport chain proteins, and therefore energy supply, in response to changes in energy demand. Also required for cytochrome c oxidase complex (complex IV) assembly. The chain is Ubiquinol-cytochrome c reductase complex assembly factor 5 from Mus musculus (Mouse).